The following is a 344-amino-acid chain: Small ribosomal subunit protein bS1m (344 aa).

Ser327 carries the phosphoserine modification.

The protein belongs to the bacterial ribosomal protein bS1 family. In terms of assembly, component of the mitochondrial small ribosomal subunit (mt-SSU). Mature yeast 74S mitochondrial ribosomes consist of a small (37S) and a large (54S) subunit. The 37S small subunit contains a 15S ribosomal RNA (15S mt-rRNA) and 34 different proteins. The 54S large subunit contains a 21S rRNA (21S mt-rRNA) and 46 different proteins.

Its subcellular location is the mitochondrion. Its function is as follows. Component of the mitochondrial ribosome (mitoribosome), a dedicated translation machinery responsible for the synthesis of mitochondrial genome-encoded proteins, including at least some of the essential transmembrane subunits of the mitochondrial respiratory chain. The mitoribosomes are attached to the mitochondrial inner membrane and translation products are cotranslationally integrated into the membrane. bS1m functionally interacts with the 5'-UTR of mitochondrial mRNAs. The protein is Small ribosomal subunit protein bS1m (MRP51) of Saccharomyces cerevisiae (strain ATCC 204508 / S288c) (Baker's yeast).